The following is a 545-amino-acid chain: Chaperonin GroEL (545 aa).

ATP-binding positions include 29–32 (TLGP), K50, 86–90 (DGTTT), G415, and D495.

The protein belongs to the chaperonin (HSP60) family. As to quaternary structure, forms a cylinder of 14 subunits composed of two heptameric rings stacked back-to-back. Interacts with the co-chaperonin GroES.

It localises to the cytoplasm. It catalyses the reaction ATP + H2O + a folded polypeptide = ADP + phosphate + an unfolded polypeptide.. Together with its co-chaperonin GroES, plays an essential role in assisting protein folding. The GroEL-GroES system forms a nano-cage that allows encapsulation of the non-native substrate proteins and provides a physical environment optimized to promote and accelerate protein folding. This chain is Chaperonin GroEL, found in Phocaeicola vulgatus (strain ATCC 8482 / DSM 1447 / JCM 5826 / CCUG 4940 / NBRC 14291 / NCTC 11154) (Bacteroides vulgatus).